We begin with the raw amino-acid sequence, 982 residues long: NACHT, LRR and PYD domains-containing protein 4C (982 aa).

In terms of domain architecture, Pyrin spans 1–93; it reads MASFFSDFGL…MERAGREIAG (93 aa). Positions 148–471 constitute an NACHT domain; it reads HMVFLQGAAG…FYLLKSHMDH (324 aa). 154–161 is a binding site for ATP; it reads GAAGIGKS. 7 LRR repeats span residues 594 to 617, 689 to 716, 746 to 773, 802 to 825, 827 to 844, 859 to 882, and 916 to 940; these read CSTL…HSYT, NQCL…VLSQ, SKML…LCHP, NKTL…VLCG, LSLP…YCLI, NQNL…LLCD, and CKTL…LFEA.

The protein belongs to the NLRP family.

Functionally, may be involved in inflammation and recognition of cytosolic pathogen-associated molecular patterns (PAMPs) not intercepted by membrane-bound receptors. This chain is NACHT, LRR and PYD domains-containing protein 4C (Nlrp4c), found in Mus musculus (Mouse).